Consider the following 227-residue polypeptide: NADH-quinone oxidoreductase subunit C (227 aa).

It belongs to the complex I 30 kDa subunit family. In terms of assembly, NDH-1 is composed of 14 different subunits. Subunits NuoB, C, D, E, F, and G constitute the peripheral sector of the complex.

Its subcellular location is the cell inner membrane. The catalysed reaction is a quinone + NADH + 5 H(+)(in) = a quinol + NAD(+) + 4 H(+)(out). NDH-1 shuttles electrons from NADH, via FMN and iron-sulfur (Fe-S) centers, to quinones in the respiratory chain. The immediate electron acceptor for the enzyme in this species is believed to be ubiquinone. Couples the redox reaction to proton translocation (for every two electrons transferred, four hydrogen ions are translocated across the cytoplasmic membrane), and thus conserves the redox energy in a proton gradient. The sequence is that of NADH-quinone oxidoreductase subunit C from Coxiella burnetii (strain RSA 331 / Henzerling II).